Here is a 166-residue protein sequence, read N- to C-terminus: Putative 4-hydroxy-4-methyl-2-oxoglutarate aldolase 1 (166 aa).

The residue at position 2 (Ala2) is an N-acetylalanine. Residues 81 to 84 (GGNP) and Arg103 each bind substrate. An a divalent metal cation-binding site is contributed by Asp104.

This sequence belongs to the class II aldolase/RraA-like family. As to quaternary structure, homotrimer. It depends on a divalent metal cation as a cofactor.

It catalyses the reaction 4-hydroxy-4-methyl-2-oxoglutarate = 2 pyruvate. The enzyme catalyses oxaloacetate + H(+) = pyruvate + CO2. Functionally, catalyzes the aldol cleavage of 4-hydroxy-4-methyl-2-oxoglutarate (HMG) into 2 molecules of pyruvate. Also contains a secondary oxaloacetate (OAA) decarboxylase activity due to the common pyruvate enolate transition state formed following C-C bond cleavage in the retro-aldol and decarboxylation reactions. The polypeptide is Putative 4-hydroxy-4-methyl-2-oxoglutarate aldolase 1 (Arabidopsis thaliana (Mouse-ear cress)).